A 466-amino-acid chain; its full sequence is Glutamate decarboxylase beta (466 aa).

Positions 62 and 83 each coordinate substrate. Pyridoxal 5'-phosphate contacts are provided by residues 126-127 (SS), threonine 212, and histidine 275. Lysine 276 carries the post-translational modification N6-(pyridoxal phosphate)lysine. 3 positions are modified to N6-acetyllysine: lysine 446, lysine 453, and lysine 464.

This sequence belongs to the group II decarboxylase family. As to quaternary structure, homohexamer composed of three dimers. Requires pyridoxal 5'-phosphate as cofactor.

The enzyme catalyses L-glutamate + H(+) = 4-aminobutanoate + CO2. Its function is as follows. Converts glutamate to gamma-aminobutyrate (GABA), consuming one intracellular proton in the reaction. The gad system helps to maintain a near-neutral intracellular pH when cells are exposed to extremely acidic conditions. The ability to survive transit through the acidic conditions of the stomach is essential for successful colonization of the mammalian host by commensal and pathogenic bacteria. The polypeptide is Glutamate decarboxylase beta (gadB) (Escherichia coli O6:H1 (strain CFT073 / ATCC 700928 / UPEC)).